We begin with the raw amino-acid sequence, 255 residues long: Probable transcriptional regulatory protein CMS0715 (255 aa).

The protein belongs to the TACO1 family.

It is found in the cytoplasm. This is Probable transcriptional regulatory protein CMS0715 from Clavibacter sepedonicus (Clavibacter michiganensis subsp. sepedonicus).